The following is a 449-amino-acid chain: 3-phosphoshikimate 1-carboxyvinyltransferase (449 aa).

Residues K28, S29, and R33 each coordinate 3-phosphoshikimate. K28 lines the phosphoenolpyruvate pocket. The phosphoenolpyruvate site is built by G105 and R133. 3-phosphoshikimate contacts are provided by S179, Q181, D332, and K359. Q181 serves as a coordination point for phosphoenolpyruvate. D332 serves as the catalytic Proton acceptor. Phosphoenolpyruvate-binding residues include R363 and R406.

The protein belongs to the EPSP synthase family. In terms of assembly, monomer.

It localises to the cytoplasm. The enzyme catalyses 3-phosphoshikimate + phosphoenolpyruvate = 5-O-(1-carboxyvinyl)-3-phosphoshikimate + phosphate. Its pathway is metabolic intermediate biosynthesis; chorismate biosynthesis; chorismate from D-erythrose 4-phosphate and phosphoenolpyruvate: step 6/7. In terms of biological role, catalyzes the transfer of the enolpyruvyl moiety of phosphoenolpyruvate (PEP) to the 5-hydroxyl of shikimate-3-phosphate (S3P) to produce enolpyruvyl shikimate-3-phosphate and inorganic phosphate. The chain is 3-phosphoshikimate 1-carboxyvinyltransferase from Nitrobacter winogradskyi (strain ATCC 25391 / DSM 10237 / CIP 104748 / NCIMB 11846 / Nb-255).